The sequence spans 207 residues: MKPLTARQQEVFELIKAKIEDTGMPPTRAEIARELGFRSANAAEEHLKALARKQAIEIIPGASRGIRILLQDPVEPEDLGLPLIGQVAAGEPILAQEHVESHYQVDPSMFKPQADFLLRVNGESMKNIGIMDGDLLAVHKTQDVHDGQVVVARVDDDVTVKRLERKGSMVFLHAENEEFAPIQVDLTSQHLSIEGIAVGVIRSTTWM.

Residues 28 to 48 constitute a DNA-binding region (H-T-H motif); it reads RAEIARELGFRSANAAEEHLK. Residues Ser-124 and Lys-161 each act as for autocatalytic cleavage activity in the active site.

This sequence belongs to the peptidase S24 family. As to quaternary structure, homodimer.

It catalyses the reaction Hydrolysis of Ala-|-Gly bond in repressor LexA.. Functionally, represses a number of genes involved in the response to DNA damage (SOS response), including recA and lexA. In the presence of single-stranded DNA, RecA interacts with LexA causing an autocatalytic cleavage which disrupts the DNA-binding part of LexA, leading to derepression of the SOS regulon and eventually DNA repair. The polypeptide is LexA repressor (Aliivibrio salmonicida (strain LFI1238) (Vibrio salmonicida (strain LFI1238))).